A 294-amino-acid polypeptide reads, in one-letter code: MDSPFRTIGLIGKPNHPDAAATLQRLHTFLLALGFTVIVEKRTGSQLIDIPKNKLVKLVDLGEQADLAIVVGGDGNMLGAARVLARFDIAVIGVNRGNLGFLTDLNPEGFEASLEQVLSGEYVEEKRFLLEVEVYRHNELKSANSAVNEAVLHADKVAHMIEFEAFINNDFVFSQRSDGLIVSTPTGSTAYSLSGGGPILTPELNAIALVPMFPHTLSSRPLVVDADNEVRLKLSLENTDSLQVSCDSHVVLAVLPGDEVVIKKADKKLRLIHPKNYSYYNVLRQKLNWGSRLY.

Residue Asp74 is the Proton acceptor of the active site. NAD(+) is bound by residues 74 to 75, 148 to 149, His159, Arg176, Asp178, and 189 to 194; these read DG, NE, and TAYSLS.

It belongs to the NAD kinase family. A divalent metal cation serves as cofactor.

It localises to the cytoplasm. It carries out the reaction NAD(+) + ATP = ADP + NADP(+) + H(+). Involved in the regulation of the intracellular balance of NAD and NADP, and is a key enzyme in the biosynthesis of NADP. Catalyzes specifically the phosphorylation on 2'-hydroxyl of the adenosine moiety of NAD to yield NADP. This chain is NAD kinase, found in Pseudoalteromonas translucida (strain TAC 125).